The following is a 178-amino-acid chain: Large ribosomal subunit protein uL10 (178 aa).

This sequence belongs to the universal ribosomal protein uL10 family. Part of the ribosomal stalk of the 50S ribosomal subunit. The N-terminus interacts with L11 and the large rRNA to form the base of the stalk. The C-terminus forms an elongated spine to which L12 dimers bind in a sequential fashion forming a multimeric L10(L12)X complex.

Functionally, forms part of the ribosomal stalk, playing a central role in the interaction of the ribosome with GTP-bound translation factors. This Gloeothece citriformis (strain PCC 7424) (Cyanothece sp. (strain PCC 7424)) protein is Large ribosomal subunit protein uL10.